A 98-amino-acid chain; its full sequence is NADH-ubiquinone oxidoreductase chain 4L (98 aa).

A run of 3 helical transmembrane segments spans residues 2 to 22 (PSIS…MLIF), 29 to 49 (SLLC…LTIL), and 61 to 81 (ILLL…LVTV).

This sequence belongs to the complex I subunit 4L family. In terms of assembly, core subunit of respiratory chain NADH dehydrogenase (Complex I) which is composed of 45 different subunits.

Its subcellular location is the mitochondrion inner membrane. It carries out the reaction a ubiquinone + NADH + 5 H(+)(in) = a ubiquinol + NAD(+) + 4 H(+)(out). Functionally, core subunit of the mitochondrial membrane respiratory chain NADH dehydrogenase (Complex I) which catalyzes electron transfer from NADH through the respiratory chain, using ubiquinone as an electron acceptor. Part of the enzyme membrane arm which is embedded in the lipid bilayer and involved in proton translocation. This is NADH-ubiquinone oxidoreductase chain 4L (MT-ND4L) from Eulemur rubriventer (Red-bellied lemur).